The chain runs to 133 residues: Small ribosomal subunit protein uS19 (133 aa).

Belongs to the universal ribosomal protein uS19 family.

Its function is as follows. Protein S19 forms a complex with S13 that binds strongly to the 16S ribosomal RNA. In Thermococcus gammatolerans (strain DSM 15229 / JCM 11827 / EJ3), this protein is Small ribosomal subunit protein uS19.